We begin with the raw amino-acid sequence, 340 residues long: Phosphatidylglycerol--prolipoprotein diacylglyceryl transferase (340 aa).

4 helical membrane passes run 19–39 (IPLRGYAFCIIIGVFVAVWLG), 54–74 (ADIAVWAVPFGLVGGRLYHVI), 93–113 (IWEGGLGIWGAIALGAVGAWI), and 119–139 (GIPLPAWADAVAPGIAFAQAF). Arg-141 contacts a 1,2-diacyl-sn-glycero-3-phospho-(1'-sn-glycerol). A run of 3 helical transmembrane segments spans residues 176–196 (HPTFLYESLWCVGVGFLVIWA), 202–221 (LGHGRAFALYVAAYCVGRAW), and 238–258 (LNDWTAIAVFLLAVLYIVLSS). The interval 266 to 340 (EIVEPGASDT…ESAAESAKKV (75 aa)) is disordered. The segment covering 284-294 (DLGKDEDKATT) has biased composition (basic and acidic residues). Over residues 295–307 (DKATATDTSTTTD) the composition is skewed to low complexity. Basic and acidic residues predominate over residues 326-340 (PSEKTESAAESAKKV).

Belongs to the Lgt family.

The protein resides in the cell membrane. It catalyses the reaction L-cysteinyl-[prolipoprotein] + a 1,2-diacyl-sn-glycero-3-phospho-(1'-sn-glycerol) = an S-1,2-diacyl-sn-glyceryl-L-cysteinyl-[prolipoprotein] + sn-glycerol 1-phosphate + H(+). It participates in protein modification; lipoprotein biosynthesis (diacylglyceryl transfer). Functionally, catalyzes the transfer of the diacylglyceryl group from phosphatidylglycerol to the sulfhydryl group of the N-terminal cysteine of a prolipoprotein, the first step in the formation of mature lipoproteins. This Streptomyces avermitilis (strain ATCC 31267 / DSM 46492 / JCM 5070 / NBRC 14893 / NCIMB 12804 / NRRL 8165 / MA-4680) protein is Phosphatidylglycerol--prolipoprotein diacylglyceryl transferase.